The following is a 345-amino-acid chain: MKTFQITRPDETIREALTDKINNLTKPKGSLGTLEELALQIGLIQQTLTPELRHPQNIIFAADHGIVDEGVSLSPKEITWQQISNFLHGGAGVNFLCRQHGFELKIVDAGVDYDLPYEKGIINMKVRKSSRNYLYEAAMTEEEMNLCIERGAEVVRQCHAEGCNVLSLGEMGIGNTSSSSMWMTCFTHIPLELCVGAGSGLDNAGVRHKYNVLQQALDHYQGDGSAHDLIRYFGGLEMVMAIGAMLQAAELKMIILVDGFIMTNCILAASQLYPEVLHYAIFGHQGDEAGHKLVLDAMGAKPLLNLGLRLGEGTGAICSYPIIDSAVRMINEMDNFAHAAITKYF.

The active-site Proton acceptor is glutamate 312.

It belongs to the CobT family.

It carries out the reaction 5,6-dimethylbenzimidazole + nicotinate beta-D-ribonucleotide = alpha-ribazole 5'-phosphate + nicotinate + H(+). The protein operates within nucleoside biosynthesis; alpha-ribazole biosynthesis; alpha-ribazole from 5,6-dimethylbenzimidazole: step 1/2. In terms of biological role, catalyzes the synthesis of alpha-ribazole-5'-phosphate from nicotinate mononucleotide (NAMN) and 5,6-dimethylbenzimidazole (DMB). This is Nicotinate-nucleotide--dimethylbenzimidazole phosphoribosyltransferase from Bacteroides fragilis (strain ATCC 25285 / DSM 2151 / CCUG 4856 / JCM 11019 / LMG 10263 / NCTC 9343 / Onslow / VPI 2553 / EN-2).